A 78-amino-acid polypeptide reads, in one-letter code: Probable [Fe-S]-dependent transcriptional repressor (78 aa).

Residues C56, C61, C64, and C70 each contribute to the iron-sulfur cluster site.

It belongs to the FeoC family.

In terms of biological role, may function as a transcriptional regulator that controls feoABC expression. The protein is Probable [Fe-S]-dependent transcriptional repressor of Cronobacter sakazakii (strain ATCC BAA-894) (Enterobacter sakazakii).